Consider the following 74-residue polypeptide: MSGGSSRRYPPELRERAVRMVAEIRGQHDSEWAAISEIARLLGVAARRRCVSGCARRRSMPAHGPGPRPKNPLR.

The protein is Insertion element IS986 uncharacterized 8.2 kDa protein of Mycobacterium tuberculosis.